Here is a 317-residue protein sequence, read N- to C-terminus: L-lactate dehydrogenase (317 aa).

NAD(+)-binding positions include valine 17, aspartate 38, lysine 43, and 82-83 (GA). Substrate is bound by residues glutamine 85, arginine 91, and 123 to 126 (NPVD). NAD(+)-binding positions include 121 to 123 (VAN) and serine 146. 151 to 154 (DSAR) is a binding site for substrate. The beta-D-fructose 1,6-bisphosphate site is built by arginine 156 and histidine 171. The Proton acceptor role is filled by histidine 178. Position 224 is a phosphotyrosine (tyrosine 224). Residue threonine 233 participates in substrate binding.

It belongs to the LDH/MDH superfamily. LDH family. As to quaternary structure, homotetramer.

It localises to the cytoplasm. It catalyses the reaction (S)-lactate + NAD(+) = pyruvate + NADH + H(+). It participates in fermentation; pyruvate fermentation to lactate; (S)-lactate from pyruvate: step 1/1. Its activity is regulated as follows. Allosterically activated by fructose 1,6-bisphosphate (FBP). In terms of biological role, catalyzes the conversion of lactate to pyruvate. This chain is L-lactate dehydrogenase, found in Moorella thermoacetica (strain ATCC 39073 / JCM 9320).